We begin with the raw amino-acid sequence, 331 residues long: Probable deacetylase MTH_1194 (331 aa).

The active-site Proton donor/acceptor is H118. Residues D155, H157, and D244 each coordinate Zn(2+).

This sequence belongs to the histone deacetylase family. Zn(2+) serves as cofactor.

Functionally, probable deacetylase. The chain is Probable deacetylase MTH_1194 from Methanothermobacter thermautotrophicus (strain ATCC 29096 / DSM 1053 / JCM 10044 / NBRC 100330 / Delta H) (Methanobacterium thermoautotrophicum).